A 625-amino-acid chain; its full sequence is Alpha-protein kinase vwkA (625 aa).

The span at 1-15 (MESKYVLSTEKESKT) shows a compositional bias: basic and acidic residues. The segment at 1 to 64 (MESKYVLSTE…GLSSGGSKTH (64 aa)) is disordered. Composition is skewed to polar residues over residues 25 to 39 (DMDSISNSLSKTSLG) and 46 to 63 (SLKTDASRSGLSSGGSKT). The stretch at 87-114 (TKDSITLAKEKEKKIEKRNEEIKLTFKA) forms a coiled coil. In terms of domain architecture, VWFA spans 122–322 (DLLFIVDCTG…KMNERIFISI (201 aa)). Positions 386–600 (TCLSSSYEMK…HCKKLGLTIP (215 aa)) constitute an Alpha-type protein kinase domain. 570–576 (GSCNLGK) contributes to the ATP binding site. The segment at 602–625 (FTSSSSTSSSSRSTSSSSSISYSY) is disordered.

This sequence belongs to the protein kinase superfamily. Alpha-type protein kinase family. ALPK subfamily. As to quaternary structure, interacts with calmodulin; in the presence of calcium. Autophosphorylated, in vitro.

Its subcellular location is the cytoplasm. The protein localises to the cytosol. It localises to the perinuclear region. The protein resides in the contractile vacuole membrane. It catalyses the reaction L-seryl-[protein] + ATP = O-phospho-L-seryl-[protein] + ADP + H(+). It carries out the reaction L-threonyl-[protein] + ATP = O-phospho-L-threonyl-[protein] + ADP + H(+). Autophosphorylation activity enhanced by calcium/calmodulin. Its function is as follows. Displays a modest preference for threonine over serine residues. Does not phosphorylate myosin II, however can phosphorylate MBP, in vitro. May be involved in the regulation of myosin II function during cytokinesis. Overexpression leads to impaired cell proliferation in suspension culture and fails to develop beyond the mound stage. Both overexpression and absence of the gene can result in defects in cytokinesis and alterations in myosin II abundance and assembly. The protein is Alpha-protein kinase vwkA (vwkA) of Dictyostelium discoideum (Social amoeba).